Consider the following 599-residue polypeptide: Glucose-6-phosphate 1-dehydrogenase 3, chloroplastic (599 aa).

Over residues 1–18 the composition is skewed to low complexity; the sequence is MSSLSCPTYRSRTSSSSP. Residues 1–23 form a disordered region; sequence MSSLSCPTYRSRTSSSSPFLSNH. Residues 1–66 constitute a chloroplast transit peptide; the sequence is MSSLSCPTYR…RSQRRSVQSS (66 aa). Residue V67 is modified to N-acetylvaline. Residues 119 to 126 and R153 contribute to the NADP(+) site; that span reads GASGDLAK. Cysteines 171 and 179 form a disulfide. Position 256 (K256) interacts with NADP(+). D-glucose 6-phosphate-binding positions include K256, 286–290, E324, and D343; that span reads HYLGK. H348 serves as the catalytic Proton acceptor. Position 441 (K441) interacts with NADP(+). Positions 444 and 449 each coordinate D-glucose 6-phosphate. NADP(+) is bound by residues R454 and R483. Residue Q485 coordinates D-glucose 6-phosphate. NADP(+)-binding positions include 491–493 and R576; that span reads YLK.

The protein belongs to the glucose-6-phosphate dehydrogenase family. As to quaternary structure, forms homodimer. Interacts with G6PD1. In terms of tissue distribution, expressed in roots, flowers and siliques.

The protein resides in the plastid. It localises to the chloroplast stroma. The catalysed reaction is D-glucose 6-phosphate + NADP(+) = 6-phospho-D-glucono-1,5-lactone + NADPH + H(+). It participates in carbohydrate degradation; pentose phosphate pathway; D-ribulose 5-phosphate from D-glucose 6-phosphate (oxidative stage): step 1/3. With respect to regulation, regulated by metabolites. Post-translationally inactivated by cysteine-mediated redox modification via the ferredoxin-thioredoxin system in the light and this avoids futile cycles with photosynthetic CO2 fixation. In terms of biological role, catalyzes the rate-limiting step of the oxidative pentose-phosphate pathway, which represents a route for the dissimilation of carbohydrates besides glycolysis. The main function of this enzyme is to provide reducing power (NADPH) and pentose phosphates for fatty acid and nucleic acid synthesis which are involved in membrane synthesis and cell division. This chain is Glucose-6-phosphate 1-dehydrogenase 3, chloroplastic, found in Arabidopsis thaliana (Mouse-ear cress).